We begin with the raw amino-acid sequence, 837 residues long: Katanin p80 WD40 repeat-containing subunit B1 homolog KTN80.4 (837 aa).

WD repeat units lie at residues 14–54 (AHSA…AILS), 57–96 (GHSSGIDSVTFDASEVLVAAGAASGTIKLWDLEEAKIVRT), 99–138 (GHRSNCISVDFHPFGEFFASGSLDTNLKIWDIRKKGCIHT), 141–182 (GHTR…TEFK), 184–222 (HEGQIQSLDFHPHEFLLATGSADRTVKFWDLETFELIGS), 225–265 (PETA…DGVD), and 267–304 (GWSRLSDMNVHEGKLLGCSYNQSCVGVWVVDLSRTEPC). The short motif at 115–131 (FFASGSLDTNLKIWDIR) is the DWD box element. Disordered regions lie at residues 307–328 (GDTAQSNGHPEKRSCSGRDPVV), 358–462 (GRLS…ANPV), and 501–614 (LQAA…LVIN). 2 stretches are compositionally biased toward polar residues: residues 376–387 (IGRSSTSQNSES) and 412–450 (TFSSTGSLPGTPHRVSSTNVSKATSGVSTAVSNAATSRR). Residues 509–520 (SPSSRNNPDLPD) show a composition bias toward low complexity. Basic and acidic residues-rich tracts occupy residues 553 to 563 (ATERSINDFRY) and 580 to 595 (RNHDENYDLVSHRSNR).

The protein belongs to the WD repeat KATNB1 family. In terms of assembly, component of KTN80-KTN1 complexes composed of a hexamer of KTN1-KTN80 heterodimers that sense microtubule (MT) geometry to confer precise MT severing. Interacts directly with AAA1/KTN1, and weakly with KTN80.1 and KTN80.3. Expressed in siliques, flowers, leaves, stems and roots.

It localises to the cytoplasm. The protein resides in the cytoskeleton. May participate in a complex which severs microtubules in an ATP-dependent manner. This activity may promote rapid reorganization of cellular microtubule arrays. Confers precision to microtubule (MT) severing by specific targeting of KTN1 to MT cleavage sites such as crossover or branching nucleation sites. Together with other KTN80s, regulates cell elongation by modulating MT organization. In Arabidopsis thaliana (Mouse-ear cress), this protein is Katanin p80 WD40 repeat-containing subunit B1 homolog KTN80.4.